The sequence spans 353 residues: 3-dehydroquinate synthase (353 aa).

Residues 61 to 66, 119 to 120, K132, and K141 contribute to the NAD(+) site; these read DGEEAK and TT. Zn(2+)-binding residues include E174, H238, and H254.

Belongs to the sugar phosphate cyclases superfamily. Dehydroquinate synthase family. Requires Co(2+) as cofactor. The cofactor is Zn(2+). It depends on NAD(+) as a cofactor.

The protein localises to the cytoplasm. The enzyme catalyses 7-phospho-2-dehydro-3-deoxy-D-arabino-heptonate = 3-dehydroquinate + phosphate. The protein operates within metabolic intermediate biosynthesis; chorismate biosynthesis; chorismate from D-erythrose 4-phosphate and phosphoenolpyruvate: step 2/7. Its function is as follows. Catalyzes the conversion of 3-deoxy-D-arabino-heptulosonate 7-phosphate (DAHP) to dehydroquinate (DHQ). This is 3-dehydroquinate synthase from Sulfolobus acidocaldarius (strain ATCC 33909 / DSM 639 / JCM 8929 / NBRC 15157 / NCIMB 11770).